Here is a 101-residue protein sequence, read N- to C-terminus: UPF0213 protein VC_A0739 (101 aa).

The region spanning 9–85 (SPWFVYLVRC…KALSKSQKEA (77 aa)) is the GIY-YIG domain.

The protein belongs to the UPF0213 family.

In Vibrio cholerae serotype O1 (strain ATCC 39315 / El Tor Inaba N16961), this protein is UPF0213 protein VC_A0739.